The chain runs to 137 residues: MLDKLDGALRFQQEALNLRAQRQEILSANIANADTPGFQARDIDFSSQLQKVMEQGRVNGSGMSLSLTAARHIPAQNIQPPDLDLLFRVPDQPSMDGNTVDMDRERTNFADNSLKYQTDLTILGGQIKGMMSVLQQG.

Belongs to the flagella basal body rod proteins family. The basal body constitutes a major portion of the flagellar organelle and consists of a number of rings mounted on a central rod. In Gram-negative bacteria, at least four rings, L, P, S and M are present, whereas Gram-positive bacteria lack the L and P rings. The rod consists of about 26 subunits of FlgG in the distal portion, and FlgB, FlgC and FlgF build up the proximal portion of the rod with about 6 subunits each. Rod assembly occurs by export via the flagellum-specific pathway of its constituent proteins and by their incorporation into the rod structure in the probable order of FlgB, FlgC, FlgF and FlgG. Another protein, FliE, also assembles onto the stable rod structure.

It is found in the bacterial flagellum basal body. Structural component of flagellum, the bacterial motility apparatus. Part of the rod structure of flagellar basal body. The polypeptide is Flagellar basal body rod protein FlgB (Yersinia ruckeri).